The sequence spans 349 residues: DNA polymerase IV (349 aa).

Positions 4 to 185 (IIHIDCDCFY…LPVAKLHGVG (182 aa)) constitute a UmuC domain. Positions 8 and 103 each coordinate Mg(2+). Residue glutamate 104 is part of the active site.

Belongs to the DNA polymerase type-Y family. In terms of assembly, monomer. Mg(2+) is required as a cofactor.

It localises to the cytoplasm. It carries out the reaction DNA(n) + a 2'-deoxyribonucleoside 5'-triphosphate = DNA(n+1) + diphosphate. Its function is as follows. Poorly processive, error-prone DNA polymerase involved in untargeted mutagenesis. Copies undamaged DNA at stalled replication forks, which arise in vivo from mismatched or misaligned primer ends. These misaligned primers can be extended by PolIV. Exhibits no 3'-5' exonuclease (proofreading) activity. May be involved in translesional synthesis, in conjunction with the beta clamp from PolIII. In Pseudomonas aeruginosa (strain UCBPP-PA14), this protein is DNA polymerase IV.